The primary structure comprises 131 residues: Guanyl-specific ribonuclease F1 (131 aa).

The signal sequence occupies residues 1–25 (MLFFKSIASLAALVSLAVASPIESR). Gln-26 carries the pyrrolidone carboxylic acid modification. 2 disulfides stabilise this stretch: Cys-31/Cys-127 and Cys-49/Cys-108. His-65 is an active-site residue. The active-site Proton acceptor is the Glu-83. The active-site Proton donor is the His-116.

It belongs to the ribonuclease N1/T1 family.

It carries out the reaction [RNA] containing guanosine + H2O = an [RNA fragment]-3'-guanosine-3'-phosphate + a 5'-hydroxy-ribonucleotide-3'-[RNA fragment].. This is Guanyl-specific ribonuclease F1 from Fusarium fujikuroi (Bakanae and foot rot disease fungus).